Consider the following 85-residue polypeptide: Probable Thioredoxin (85 aa).

One can recognise a Glutaredoxin domain in the interval 2–85 (VVKIEVFTSP…LFEAISDEIE (84 aa)). Cysteines 13 and 16 form a disulfide.

This sequence belongs to the glutaredoxin family.

The protein resides in the cytoplasm. Functionally, does not function as a glutathione-disulfide oxidoreductase in the presence of glutathione and glutathione reductase. May be a component of a ribonucleotide-reducing system distinct from the previously described systems utilizing thioredoxin or glutaredoxin. This Methanothermobacter marburgensis (strain ATCC BAA-927 / DSM 2133 / JCM 14651 / NBRC 100331 / OCM 82 / Marburg) (Methanobacterium thermoautotrophicum) protein is Probable Thioredoxin.